Reading from the N-terminus, the 258-residue chain is Imidazole glycerol phosphate synthase subunit HisF (258 aa).

Residues Asp12 and Asp131 contribute to the active site.

It belongs to the HisA/HisF family. Heterodimer of HisH and HisF.

Its subcellular location is the cytoplasm. The catalysed reaction is 5-[(5-phospho-1-deoxy-D-ribulos-1-ylimino)methylamino]-1-(5-phospho-beta-D-ribosyl)imidazole-4-carboxamide + L-glutamine = D-erythro-1-(imidazol-4-yl)glycerol 3-phosphate + 5-amino-1-(5-phospho-beta-D-ribosyl)imidazole-4-carboxamide + L-glutamate + H(+). Its pathway is amino-acid biosynthesis; L-histidine biosynthesis; L-histidine from 5-phospho-alpha-D-ribose 1-diphosphate: step 5/9. In terms of biological role, IGPS catalyzes the conversion of PRFAR and glutamine to IGP, AICAR and glutamate. The HisF subunit catalyzes the cyclization activity that produces IGP and AICAR from PRFAR using the ammonia provided by the HisH subunit. The chain is Imidazole glycerol phosphate synthase subunit HisF from Pseudarthrobacter chlorophenolicus (strain ATCC 700700 / DSM 12829 / CIP 107037 / JCM 12360 / KCTC 9906 / NCIMB 13794 / A6) (Arthrobacter chlorophenolicus).